A 189-amino-acid chain; its full sequence is Peptidyl-tRNA hydrolase (189 aa).

Position 14 (tyrosine 14) interacts with tRNA. Histidine 19 functions as the Proton acceptor in the catalytic mechanism. TRNA contacts are provided by tyrosine 64, asparagine 66, and asparagine 112.

Belongs to the PTH family. In terms of assembly, monomer.

The protein localises to the cytoplasm. The enzyme catalyses an N-acyl-L-alpha-aminoacyl-tRNA + H2O = an N-acyl-L-amino acid + a tRNA + H(+). Hydrolyzes ribosome-free peptidyl-tRNAs (with 1 or more amino acids incorporated), which drop off the ribosome during protein synthesis, or as a result of ribosome stalling. Functionally, catalyzes the release of premature peptidyl moieties from peptidyl-tRNA molecules trapped in stalled 50S ribosomal subunits, and thus maintains levels of free tRNAs and 50S ribosomes. The polypeptide is Peptidyl-tRNA hydrolase (Clostridium botulinum (strain Langeland / NCTC 10281 / Type F)).